Here is a 162-residue protein sequence, read N- to C-terminus: Zinc finger protein ZAT12 (162 aa).

C2H2-type zinc fingers lie at residues 39-61 (FTCK…RASH) and 82-104 (HPCP…MRRH).

Expressed in roots, stems and flowers.

The protein localises to the nucleus. Its function is as follows. Transcriptional repressor involved in light acclimation, cold and oxidative stress responses. May regulate a collection of transcripts involved in response to high-light, cold and oxidative stress. This Arabidopsis thaliana (Mouse-ear cress) protein is Zinc finger protein ZAT12 (ZAT12).